A 200-amino-acid polypeptide reads, in one-letter code: NADH-quinone oxidoreductase subunit C (200 aa).

Belongs to the complex I 30 kDa subunit family. As to quaternary structure, NDH-1 is composed of 14 different subunits. Subunits NuoB, C, D, E, F, and G constitute the peripheral sector of the complex.

The protein resides in the cell inner membrane. It catalyses the reaction a quinone + NADH + 5 H(+)(in) = a quinol + NAD(+) + 4 H(+)(out). Functionally, NDH-1 shuttles electrons from NADH, via FMN and iron-sulfur (Fe-S) centers, to quinones in the respiratory chain. The immediate electron acceptor for the enzyme in this species is believed to be ubiquinone. Couples the redox reaction to proton translocation (for every two electrons transferred, four hydrogen ions are translocated across the cytoplasmic membrane), and thus conserves the redox energy in a proton gradient. The chain is NADH-quinone oxidoreductase subunit C from Thiobacillus denitrificans (strain ATCC 25259 / T1).